A 152-amino-acid polypeptide reads, in one-letter code: Snaclec anticoagulant protein subunit A (152 aa).

A signal peptide spans 1-23 (MGRFIFVSFGLLVVYLSLSGTAA). In terms of domain architecture, C-type lectin spans 24-152 (DCSSSWSSYE…EQRDPFVCEA (129 aa)). 3 disulfide bridges follow: Cys-25–Cys-36, Cys-53–Cys-150, and Cys-125–Cys-142. Ca(2+) is bound by residues Ser-64, Glu-66, and Glu-70. Ca(2+) is bound at residue Glu-151.

It belongs to the snaclec family. As to quaternary structure, heterodimer of subunits A and B; disulfide-linked. Expressed by the venom gland.

It localises to the secreted. In terms of biological role, anticoagulant protein which binds to the gamma-carboxyglutamic acid-domain regions of factors IX and factor X in the presence of calcium with a 1 to 1 stoichiometry. Also inhibits platelet aggregation by binding to platelet glycoprotein Ibalpha (GP1BA) and functioning as a blocker of vWF. Is devoid of hemorrhagic and lethal activities. Possesses antithrombotic and thrombolytic activities. Also hydrolyzes the Aalpha-chain of fibrinogen. Does not affect the Bbeta-chain and the gamma chain. In Deinagkistrodon acutus (Hundred-pace snake), this protein is Snaclec anticoagulant protein subunit A.